A 69-amino-acid chain; its full sequence is Conotoxin Eb6.9 (69 aa).

The signal sequence occupies residues 1–17; that stretch reads VLIIAVLFLTACQLTTA. The propeptide occupies 18–41; sequence ETYSRGRQKHRARRSTDKNSKWTR. Cystine bridges form between Cys43/Cys57, Cys50/Cys61, and Cys56/Cys68.

Belongs to the conotoxin O1 superfamily. In terms of tissue distribution, expressed by the venom duct.

The protein localises to the secreted. The protein is Conotoxin Eb6.9 (E1) of Conus ebraeus (Hebrew cone).